We begin with the raw amino-acid sequence, 220 residues long: Small ribosomal subunit protein uS3 (220 aa).

The KH type-2 domain occupies Ile24 to Ser93.

It belongs to the universal ribosomal protein uS3 family. In terms of assembly, part of the 30S ribosomal subunit.

Its function is as follows. Binds the lower part of the 30S subunit head. The protein is Small ribosomal subunit protein uS3 of Pyrobaculum arsenaticum (strain DSM 13514 / JCM 11321 / PZ6).